The primary structure comprises 170 residues: Peptide deformylase 1 (170 aa).

Fe cation is bound by residues Cys-91 and His-133. Glu-134 is a catalytic residue. His-137 contacts Fe cation.

The protein belongs to the polypeptide deformylase family. It depends on Fe(2+) as a cofactor.

The catalysed reaction is N-terminal N-formyl-L-methionyl-[peptide] + H2O = N-terminal L-methionyl-[peptide] + formate. Its function is as follows. Removes the formyl group from the N-terminal Met of newly synthesized proteins. Requires at least a dipeptide for an efficient rate of reaction. N-terminal L-methionine is a prerequisite for activity but the enzyme has broad specificity at other positions. The chain is Peptide deformylase 1 from Vibrio vulnificus (strain CMCP6).